A 658-amino-acid polypeptide reads, in one-letter code: DNA mismatch repair protein MutL (658 aa).

Residues 114–130 (RQEDSSHATQVKAEDGK) are compositionally biased toward basic and acidic residues. Residues 114-137 (RQEDSSHATQVKAEDGKLSSPTAA) are disordered.

This sequence belongs to the DNA mismatch repair MutL/HexB family.

In terms of biological role, this protein is involved in the repair of mismatches in DNA. It is required for dam-dependent methyl-directed DNA mismatch repair. May act as a 'molecular matchmaker', a protein that promotes the formation of a stable complex between two or more DNA-binding proteins in an ATP-dependent manner without itself being part of a final effector complex. This is DNA mismatch repair protein MutL from Neisseria meningitidis serogroup C / serotype 2a (strain ATCC 700532 / DSM 15464 / FAM18).